The following is a 292-amino-acid chain: Glyoxylase B2 (292 aa).

6 residues coordinate Zn(2+): His72, His74, Asp76, His77, His148, and Asp166. Substrate is bound by residues 175–181 (TARCDFP), 208–210 (HDY), and 284–287 (KIPL). His208 provides a ligand contact to Zn(2+).

This sequence belongs to the metallo-beta-lactamase superfamily. Glyoxalase II family. It depends on Zn(2+) as a cofactor.

The polypeptide is Glyoxylase B2 (gloB2) (Dictyostelium discoideum (Social amoeba)).